The sequence spans 355 residues: Uroporphyrinogen decarboxylase (355 aa).

Residues 38–42, aspartate 87, tyrosine 162, serine 217, and histidine 331 contribute to the substrate site; that span reads RQAGR.

This sequence belongs to the uroporphyrinogen decarboxylase family. As to quaternary structure, homodimer.

It is found in the cytoplasm. The catalysed reaction is uroporphyrinogen III + 4 H(+) = coproporphyrinogen III + 4 CO2. It functions in the pathway porphyrin-containing compound metabolism; protoporphyrin-IX biosynthesis; coproporphyrinogen-III from 5-aminolevulinate: step 4/4. In terms of biological role, catalyzes the decarboxylation of four acetate groups of uroporphyrinogen-III to yield coproporphyrinogen-III. This Streptomyces coelicolor (strain ATCC BAA-471 / A3(2) / M145) protein is Uroporphyrinogen decarboxylase.